The following is a 339-amino-acid chain: Biotin synthase (339 aa).

The 228-residue stretch at serine 51–arginine 278 folds into the Radical SAM core domain. Positions 66, 70, and 73 each coordinate [4Fe-4S] cluster. Residues cysteine 110, cysteine 141, cysteine 201, and arginine 273 each coordinate [2Fe-2S] cluster.

The protein belongs to the radical SAM superfamily. Biotin synthase family. As to quaternary structure, homodimer. [4Fe-4S] cluster serves as cofactor. It depends on [2Fe-2S] cluster as a cofactor.

The enzyme catalyses (4R,5S)-dethiobiotin + (sulfur carrier)-SH + 2 reduced [2Fe-2S]-[ferredoxin] + 2 S-adenosyl-L-methionine = (sulfur carrier)-H + biotin + 2 5'-deoxyadenosine + 2 L-methionine + 2 oxidized [2Fe-2S]-[ferredoxin]. It functions in the pathway cofactor biosynthesis; biotin biosynthesis; biotin from 7,8-diaminononanoate: step 2/2. Functionally, catalyzes the conversion of dethiobiotin (DTB) to biotin by the insertion of a sulfur atom into dethiobiotin via a radical-based mechanism. The chain is Biotin synthase from Herminiimonas arsenicoxydans.